The sequence spans 130 residues: Small ribosomal subunit protein uS9 (130 aa).

Positions 110–130 are disordered; sequence AKERKKYGRKGARARFQFSKR. The span at 111 to 130 shows a compositional bias: basic residues; that stretch reads KERKKYGRKGARARFQFSKR.

It belongs to the universal ribosomal protein uS9 family.

The protein is Small ribosomal subunit protein uS9 of Syntrophotalea carbinolica (strain DSM 2380 / NBRC 103641 / GraBd1) (Pelobacter carbinolicus).